The chain runs to 186 residues: Napin embryo-specific (186 aa).

The first 21 residues, 1 to 21 (MANKLFLVSATLALFFLLTNA), serve as a signal peptide directing secretion. Propeptides lie at residues 22–38 (SVYR…ATNP) and 77–97 (PSWT…QQQG).

This sequence belongs to the 2S seed storage albumins family. As to quaternary structure, the mature protein consists of a small and a large chain linked by disulfide bonds. In terms of tissue distribution, cotyledons and the axis.

Functionally, the small, basic, water-soluble napins are one of the two major kinds of storage proteins synthesized in the seed during its maturation. The chain is Napin embryo-specific from Brassica napus (Rape).